A 3038-amino-acid chain; its full sequence is MAQSMYPNEPIVVVGSGCRFPGDANTPSKLWELLQHPRDVQSRIPKERFDVDTFYHPDGKHHGRTNAPYAYVLQDDLGAFDAAFFNIQAGEAESMDPQHRLLLETVYEAVTNAGMRIQDLQGTSTAVYVGVMTHDYETVSTRDLENIPTYSATGVAVSVASNRISYFFDWHGPSMTIDTACSSSLVAVHLAVQQLRTGQSSMAIAAGANLILGPMTFVLESKLSMLSPSGRSRMWDAGADGYARGEAVCSVVLKTLSQALRDGDTIECVIRETGVNQDGRTTGITMPNHSAQEALIKATYAQAGLDITKAEDRCQFFEAHGTGTPAGDPQEAEAIATAFFGHEQVARSDGNERAPLFVGSAKTVVGHTEGTAGLAGLMKASFAVRHGVIPPNLLFDKISPRVAPFYKNLRIPTEATQWPALPPGQPRRASVNSFGFGGTNAHAIIEEYMEPEQNQLRVSNNEDCPPMTGVLSLPLVLSAKSQRSLKIMMEEMLQFLETHPEIHLHDLTWSLLRKRSVLPFRRAIVGHSHETIRRALEDAIEDGIVSSDFTTEVRGQPSVLGIFTGQGAQWPGMLKNLIEASPYVRSIVRELDDSLQSLPEKYRPSWTLLDQFMLEGEASNVQYASFSQPLCCAVQIVLVRLLEAARIRFTAVVGHSSGEIACAFAAGLISASVAIRIAYLRGVVSAGGARGTPGAMLAAGMSFEEAQEICELDAFEGRICVAASNSPDSVTFSGDANAIDHLKSMLEDESTFARLLRVDTAYHSHHMLPCADPYMQALEECGCAVADAGSPAGSVPWYSSVNAENRQMAARDVTAEYWKDNLVSPVLFSHAVQRAVVTHKALDIGIEVGCHPALKSPCVATIKDVLSGVDLAYTGCLERGKNDLDTFSRALAYLWERFGASSFDADEFMRAVAPDRPCMSVSKLLPAYPWDHSRRYWVESRATRHHLRGPKPHLLLGKLSEYSTPLSFQWLNFVRPRDIEWLDGHALQGQTVFPAAGYIVMAMEAALMIAGTHAKQVQLLEILDMSIDKAVIFDDEDSLVELNLTADVSRNAGEAGSMTISFKIDSCLSKEGNLSLSAKGQLALMIGDVNSRTTSASDQHHLPPPEEEHPHMNRVNIKAFYHELGLMGYNYSKDFRRLHNMQRADLRASGTIDFIPLMDEGNGCPLLLHPASLDVAFQTVIGAYSSPGDRRLRCLYVPTHVDRITLVPSLCLATAESGCEKVAFNTINTYDKGDYLSGDIAVFDAEQTTLFQVENITFKPFSPPDASTDHAMFARWSWGPLTPDSLLDNPEYWATAQDKEAIPIIERIVYFYIRSFLNQLTLEERQKAAFHLQKQIEWLEQVLASAKEGRHLWYDPGWENDTEAQIEHLCTANSYHPHVRLVQRVGQHLLPTVRSNGNPFDLLDHDGLLTEFYTNTLSFGPALHYARELVAQIAHRYQSMDILEIGAGTGGATKYVLATPQLGFNSYTYTDISTGFFEQAREQFAPFEDRMVFEPLDIRRSPAEQGFETHAYDLIIASNVLHATPDLEKTMAHARSLLKPGGQMVILEITHKEHTRLGFIFGLFADWWAGVDDGRCTEPFVSFDRWDAILKRVGFSGVDSRTTDRDANLFPTSVFSTHAIDATVEYLDAPLASSGTVKDSYPPLVVVGGQTPKSQRLLNDIKAIMPPRPLQTYKRLVDLLDAEELPMKSTFVMLTELDEELFAGLTEETFEATKLLLTYSSNTVWLTENAWVQHPHQASTIGMLRSIRREHPDLGVHVLDVDAVETFDATFLVEQVLRLEEHTDELASSTTWTQEPEVSWCKGRPWIPRLKRDLARNNRMNSSRRPIYEMIDSSRAPVALQTAPDSSSYFLESAETWFVPESVRQMETKTVYVHFSCPHALRVGQLGFFYLVQGHVQEGNREVPVVALAERNASIVHVRPDYIYTEADNNLSEGGGSLIVTVLAAAVLAETVISTAKSLGVTDSILVLNPPSICGQMLLHAGEEIGLQVHLATTSGNRSSVSAGDAKSWLTLHARDTDWHLRRVLPRGVQAFVDLSADQSCECLTQRMMKVLMPGCAHYRAADLFTDTVSTELHRGLRHQASLPAAYWEHVVSLARQGLSSVSEGWEVMPCTQFAAHADKTRPDLSTVISWPRESDKATLPTRVRSIDAETLFAADKTYLLVGLTGDLGRSLGRWMVQHGACHIVLTSRNPQVNPKWLAHVEELGGRVTVLSMDVTSENSVDAGLAKIKDLHLPPVGGIAFGPLVLQDVMLKNMELPMMEMVLNPKVEGVRILHEKFSDPTSSNPLDFFVMFSSIVAVMGNPGQANYSAANCYLQALAQQRVASGLAASTIDIGAVYGVGFVTRAELEEDFNAIRFMFDSVEEHELHTLFAEAVVAGRRAVHQQEQQRKFATVLDMADLELTTGIPPLDPALKDRITFFDDPRIGNLKIPEYRGAKAGEGAAGSKGSVKEQLLQATNLDQVRQIVIDGLSAKLQVTLQIPDGESVHPTISLIDQGVDSLGAVTVGTWFSKQLYLDLPLLKVLGGASIADLADEAAARLPPSSIPLVAATDGGAESTDNTSENEVSGREDTDLSAAATITEPSSADEDDTEPGDEDVPRSHHPLSLGQEYSWRIQQGAEDPTVFNNTIGMFMKGPIDLKRLYKALRAVLRRHEIFRTGFANVDENGMAQLVFGQTKNKVQTIQVSDRAGAEEGYRQLVQTRYNPAAGDTLRLVDFFWGQDDHLLVVAYHRLVGDGSTTENIFVEAGQLYDGRSLSPRVPQFADLAARQRAMLEDGRMEEDLAYWKEMHQRPSSIPVLPLMRPLVGNSSTSNTPNFQHCGSWQQHEAVARLDPMVAFRIKERSRKHKATPMQFYLAAYQVLLARLTDSTDLTVGLADTNRATVDEMAAMGFFANLLPLRFRDFRPHITFGEHLIATRDLVREALQHARVPYGVLLDQLGLEVPVPTSNQPAPLLQAVFDYKQGQAESGTIGGAKITEVIATRERTPYDVVLEMSDDPTKDPLLTAKLQSSRYEAHHPQAFLESYMSLLSMFSMNPALKLA.

In terms of domain architecture, Ketosynthase family 3 (KS3) spans 8 to 447; sequence NEPIVVVGSG…GTNAHAIIEE (440 aa). Catalysis depends on for beta-ketoacyl synthase activity residues Cys181, His320, and His367. A malonyl-CoA:ACP transacylase (MAT) domain region spans residues 562-889; the sequence is IFTGQGAQWP…GKNDLDTFSR (328 aa). Ser656 (for malonyltransferase activity) is an active-site residue. The lovC-binding stretch occupies residues 695-757; sequence AMLAAGMSFE…DESTFARLLR (63 aa). The tract at residues 953 to 1089 is N-terminal hotdog fold; sequence HLLLGKLSEY…GQLALMIGDV (137 aa). A dehydratase (DH) domain region spans residues 953 to 1263; that stretch reads HLLLGKLSEY…ENITFKPFSP (311 aa). In terms of domain architecture, PKS/mFAS DH spans 953-1267; it reads HLLLGKLSEY…FKPFSPPDAS (315 aa). Residue His985 is the Proton acceptor; for dehydratase activity of the active site. A C-terminal hotdog fold region spans residues 1107-1267; that stretch reads EEHPHMNRVN…FKPFSPPDAS (161 aa). Asp1174 (proton donor; for dehydratase activity) is an active-site residue. The methyltransferase (CMet) domain stretch occupies residues 1443–1543; that stretch reads LEIGAGTGGA…ARSLLKPGGQ (101 aa). Positions 2139-2437 are ketoreductase (KR) domain; sequence TLPTRVRSID…KIPEYRGAKA (299 aa). One can recognise a Carrier domain in the interval 2463–2538; that stretch reads QIVIDGLSAK…DLADEAAARL (76 aa). Residue Ser2498 is modified to O-(pantetheine 4'-phosphoryl)serine. The disordered stretch occupies residues 2546–2602; the sequence is VAATDGGAESTDNTSENEVSGREDTDLSAAATITEPSSADEDDTEPGDEDVPRSHHP. The segment covering 2583–2594 has biased composition (acidic residues); sequence SADEDDTEPGDE. The interval 2602–2952 is inactive Condensation domain; sequence PLSLGQEYSW…PTSNQPAPLL (351 aa).

As to quaternary structure, homodimer. Each MAT domain from the lovB homodimer binds one lovC molecule to form the final active lovB-lovC megasynthase complex. It depends on pantetheine 4'-phosphate as a cofactor.

The catalysed reaction is holo-[lovastatin nonaketide synthase] + 9 malonyl-CoA + S-adenosyl-L-methionine + 11 NADPH + 19 H(+) = dihydromonacolin L-[lovastatin nonaketide synthase] + S-adenosyl-L-homocysteine + 9 CO2 + 11 NADP(+) + 9 CoA + 6 H2O. It participates in polyketide biosynthesis; lovastatin biosynthesis. Lovastatin nonaketide synthase; part of the gene cluster that mediates the biosynthesis of lovastatin (also known as mevinolin, mevacor or monacolin K), a hypolipidemic inhibitor of (3S)-hydroxymethylglutaryl-coenzyme A (HMG-CoA) reductase (HMGR). The first step in the biosynthesis of lovastatin is the production of dihydromonacolin L acid by the lovastatin nonaketide synthase lovB and the trans-acting enoyl reductase lovC (called the lovB-lovC megasynthase complex) via condensation of one acetyl-CoA unit and 8 malonyl-CoA units. Dihydromonacolin L acid is released from lovB by the thioesterase lovG. Next, dihydromonacolin L acid is oxidized by the dihydromonacolin L monooxygenase lovA twice to form monacolin J acid. The 2-methylbutyrate moiety of lovastatin is synthesized by the lovastatin diketide synthase lovF via condensation of one acetyl-CoA unit and one malonyl-CoA unit. Finally, the covalent attachment of this moiety to monacolin J acid is catalyzed by the transesterase lovD to yield lovastatin. LovD has broad substrate specificity and can also convert monacolin J to simvastatin using alpha-dimethylbutanoyl-S-methyl-3-mercaptopropionate (DMB-S-MMP) as the thioester acyl donor, and can also catalyze the reverse reaction and function as hydrolase in vitro. LovD has much higher activity with LovF-bound 2-methylbutanoate than with free diketide substrates. This Aspergillus terreus (strain NIH 2624 / FGSC A1156) protein is Lovastatin nonaketide synthase, polyketide synthase component (lovB).